The chain runs to 642 residues: Threonine--tRNA ligase (642 aa).

One can recognise a TGS domain in the interval 1–61 (MPVITLPDGS…ENDAQLSIIT (61 aa)). A catalytic region spans residues 243-534 (DHRKIGKQLD…LTEEFAGFFP (292 aa)). Lys-286 bears the N6-acetyllysine mark. Zn(2+) is bound by residues Cys-334, His-385, and His-511.

The protein belongs to the class-II aminoacyl-tRNA synthetase family. Homodimer. The cofactor is Zn(2+).

The protein resides in the cytoplasm. It carries out the reaction tRNA(Thr) + L-threonine + ATP = L-threonyl-tRNA(Thr) + AMP + diphosphate + H(+). In terms of biological role, catalyzes the attachment of threonine to tRNA(Thr) in a two-step reaction: L-threonine is first activated by ATP to form Thr-AMP and then transferred to the acceptor end of tRNA(Thr). Also edits incorrectly charged L-seryl-tRNA(Thr). This Escherichia coli O8 (strain IAI1) protein is Threonine--tRNA ligase.